The following is a 922-amino-acid chain: Metabotropic glutamate receptor 7 (922 aa).

Positions 1 to 34 are cleaved as a signal peptide; sequence MVQLRKLLRVLTLMKFPCCVLEVLLCALAAAARG. The Extracellular segment spans residues 35-590; that stretch reads QEMYAPHSIR…IIKLEWHSPW (556 aa). Cys67 and Cys109 are oxidised to a cystine. Asn98 carries an N-linked (GlcNAc...) asparagine glycan. Residues Ser159, 180 to 182, Tyr230, and Asp314 each bind L-glutamate; that span reads AST. Intrachain disulfides connect Cys249/Cys541, Cys374/Cys390, Cys430/Cys437, Cys523/Cys542, Cys527/Cys545, Cys548/Cys560, and Cys563/Cys576. Lys407 contacts L-glutamate. Asn458 and Asn486 each carry an N-linked (GlcNAc...) asparagine glycan. An N-linked (GlcNAc...) asparagine glycan is attached at Asn572. A helical transmembrane segment spans residues 591–615; that stretch reads AVIPVFLAMLGIIATIFVMATFIRY. Topologically, residues 616 to 627 are cytoplasmic; that stretch reads NDTPIVRASGRE. A helical transmembrane segment spans residues 628–648; the sequence is LSYVLLTGIFLCYIITFLMIA. Residues 649–654 are Extracellular-facing; that stretch reads KPDVAV. A helical membrane pass occupies residues 655-675; sequence CSFRRVFLGLGMCISYAALLT. The Cytoplasmic portion of the chain corresponds to 676 to 702; sequence KTNRIYRIFEQGKKSVTAPRLISPTSQ. The chain crosses the membrane as a helical span at residues 703-723; the sequence is LAITSSLISVQLLGVFIWFGV. Residues 724-753 lie on the Extracellular side of the membrane; that stretch reads DPPNIIIDYDEHKTMNPEQARGVLKCDITD. The helical transmembrane segment at 754–775 threads the bilayer; the sequence is LQIICSLGYSILLMVTCTVYAI. Topologically, residues 776–788 are cytoplasmic; that stretch reads KTRGVPENFNEAK. A helical transmembrane segment spans residues 789 to 810; it reads PIGFTMYTTCIVWLAFIPIFFG. At 811 to 825 the chain is on the extracellular side; sequence TAQSAEKLYIQTTTL. The helical transmembrane segment at 826–850 threads the bilayer; that stretch reads TISMNLSASVALGMLYMPKVYIIIF. Topologically, residues 851–922 are cytoplasmic; that stretch reads HPELNVQKRK…VTWYTIPPTV (72 aa).

It belongs to the G-protein coupled receptor 3 family. Homodimer. Interacts with PICK1.

It localises to the cell membrane. Its function is as follows. G-protein coupled receptor activated by glutamate that regulates axon outgrowth through the MAPK-cAMP-PKA signaling pathway during neuronal development. Ligand binding causes a conformation change that triggers signaling via guanine nucleotide-binding proteins (G proteins) and modulates the activity of downstream effectors, such as adenylate cyclase that it inhibits. This is Metabotropic glutamate receptor 7 (GRM7) from Pongo abelii (Sumatran orangutan).